A 770-amino-acid chain; its full sequence is Arf-GAP with coiled-coil, ANK repeat and PH domain-containing protein 2 (770 aa).

The BAR domain maps to 6–226; it reads DFEECLKDSP…MKDLGAQLDR (221 aa). Residues 266 to 361 enclose the PH domain; the sequence is GIVMEGYLFK…WIKAVQTSIA (96 aa). A disordered region spans residues 371–392; it reads SEKLDKKSSPSTGSLDSGSESK. Low complexity predominate over residues 379-388; that stretch reads SPSTGSLDSG. Phosphoserine occurs at positions 384 and 387. Residues 399–520 enclose the Arf-GAP domain; it reads ESALQRVQCI…KFVDKYSTLL (122 aa). The C4-type zinc-finger motif lies at 414-437; it reads CCDCGLADPRWASINLGITLCIEC. Ser-521 carries the post-translational modification Phosphoserine. Over residues 548–561 the composition is skewed to polar residues; the sequence is TPVKSNDSGIQQCS. Positions 548-571 are disordered; that stretch reads TPVKSNDSGIQQCSDDGRESLPST. Residues Ser-573 and Ser-576 each carry the phosphoserine modification. ANK repeat units follow at residues 632–661, 665–694, and 698–727; these read NQAT…NVNQ, QGRG…NQHA, and EGKD…NEEM. Position 734 is a phosphotyrosine (Tyr-734). Ser-767 is modified (phosphoserine).

Interacts with RAB35 (GTP-bound form); the interaction is direct and probably recruits ACAP2 to membranes. Interacts with MICALL1; the interaction is indirect through RAB35.

The protein resides in the endosome membrane. It is found in the cell membrane. GAP activity stimulated by phosphatidylinositol 4,5-bisphosphate (PIP2) and phosphatidic acid. In terms of biological role, GTPase-activating protein (GAP) for ADP ribosylation factor 6 (ARF6). Doesn't show GAP activity for RAB35. The polypeptide is Arf-GAP with coiled-coil, ANK repeat and PH domain-containing protein 2 (Acap2) (Rattus norvegicus (Rat)).